The chain runs to 506 residues: MQNFKELGISDNTVQSLESMGFKEPTPIQKDSIPYALQGIDILGQAQTGTGKTGAFGIPLIEKVVGKQGVQSLILAPTRELAMQVAEQLREFSRGQGVQVVTVFGGMPIERQIKALKKGPQIVVGTPGRVIDHLNRRTLKTDGIHTLILDEADEMMNMGFIDDMRFIMDKIPAVQRQTMLFSATMPKAIQALVQQFMKSPKIIKTMNNEMSDPQIEEFYTIVKELEKFDTFTNFLDVHQPELAIVFGRTKRRVDELTSALISKGYKAEGLHGDITQAKRLEVLKKFKNDQINILVATDVAARGLDISGVSHVYNFDIPQDTESYTHRIGRTGRAGKEGIAVTFVNPIEMDYIRQIEDANGRKMSALRPPHRKEVLQAREDDIKEKVENWMSKESESRLKRISTELLNEYNDVDLVAALLQELVEANDEVEVQLTFEKPLSRKGRNGKPSGSRNRNSKRGNPKFDSKSKRSKGYSSKKKSTKKFDRKEKSSGGSRPMKGRTFADHQK.

The short motif at 2-30 (QNFKELGISDNTVQSLESMGFKEPTPIQK) is the Q motif element. Positions 33–203 (IPYALQGIDI…QQFMKSPKII (171 aa)) constitute a Helicase ATP-binding domain. 46 to 53 (AQTGTGKT) is an ATP binding site. Positions 150–153 (DEAD) match the DEAD box motif. One can recognise a Helicase C-terminal domain in the interval 214-375 (QIEEFYTIVK…LRPPHRKEVL (162 aa)). The interval 436 to 506 (EKPLSRKGRN…KGRTFADHQK (71 aa)) is disordered. Residues 468–480 (KRSKGYSSKKKST) are compositionally biased toward basic residues.

This sequence belongs to the DEAD box helicase family. CshA subfamily. In terms of assembly, oligomerizes, may be a member of the RNA degradosome.

The protein resides in the cytoplasm. The catalysed reaction is ATP + H2O = ADP + phosphate + H(+). Its function is as follows. DEAD-box RNA helicase possibly involved in RNA degradation. Unwinds dsRNA in both 5'- and 3'-directions, has RNA-dependent ATPase activity. In Staphylococcus aureus (strain MW2), this protein is DEAD-box ATP-dependent RNA helicase CshA.